A 433-amino-acid polypeptide reads, in one-letter code: Cyclin-dependent kinase 15 (433 aa).

Positions 46-83 (ASSSTASFHPRGLEAASAQKLKSKRPRSNSDSFQEENL) are disordered. A Protein kinase domain is found at 52–336 (SFHPRGLEAA…SKLPNYNPEW (285 aa)). ATP-binding positions include 58 to 66 (LEAASAQKL) and Glu-81. Thr-173 acts as the Proton acceptor in catalysis.

It belongs to the protein kinase superfamily. CMGC Ser/Thr protein kinase family. CDC2/CDKX subfamily. The cofactor is Mg(2+).

The enzyme catalyses L-seryl-[protein] + ATP = O-phospho-L-seryl-[protein] + ADP + H(+). It carries out the reaction L-threonyl-[protein] + ATP = O-phospho-L-threonyl-[protein] + ADP + H(+). In terms of biological role, serine/threonine-protein kinase that acts like an antiapoptotic protein that counters TRAIL/TNFSF10-induced apoptosis by inducing phosphorylation of BIRC5 at 'Thr-34'. This chain is Cyclin-dependent kinase 15 (Cdk15), found in Mus musculus (Mouse).